A 50-amino-acid polypeptide reads, in one-letter code: Toxic protein HokE (50 aa).

Residues 5-25 (YALAAVIVLCLTVLGFTLLVG) traverse the membrane as a helical segment.

The protein belongs to the Hok/Gef family.

The protein localises to the cell inner membrane. Its function is as follows. Toxic component of a type I toxin-antitoxin (TA) system; if it expressed it could be neutralized by antisense antitoxin RNA SokE. This chain is Toxic protein HokE, found in Escherichia coli (strain K12).